The following is a 66-amino-acid chain: Large ribosomal subunit protein bL33c (66 aa).

As to quaternary structure, component of the chloroplast large ribosomal subunit (LSU). Mature 70S chloroplast ribosomes of higher plants consist of a small (30S) and a large (50S) subunit. The 30S small subunit contains 1 molecule of ribosomal RNA (16S rRNA) and 24 different proteins. The 50S large subunit contains 3 rRNA molecules (23S, 5S and 4.5S rRNA) and 33 different proteins.

It localises to the plastid. The protein resides in the chloroplast. Functionally, component of the chloroplast ribosome (chloro-ribosome), a dedicated translation machinery responsible for the synthesis of chloroplast genome-encoded proteins, including proteins of the transcription and translation machinery and components of the photosynthetic apparatus. The chain is Large ribosomal subunit protein bL33c (rpl33) from Spinacia oleracea (Spinach).